We begin with the raw amino-acid sequence, 1939 residues long: MSASSDAEMAVFGEAAPFLRKSEKERIEAQNKPFDAKTSVFVAEPKASYVKSTIQSKEGGKVTVKTEGGATLTVREDQVFPMNPPKYDKIEDMAMMTHLHEPGVLYNLKERYAAWMIYTYSGLFCVTVNPYKWLPVYNPEVVAAYRGKKRQEAPPHIFSISDNAYQFMLTDRENQSILITGESGAGKTVNTKRVIQYFATIAVTGEKKKEEATSGKMQGTLEDQIISANPLLEAFGNAKTVRNDNSSRFGKFIRIHFGTTGKLASADIETYLLEKSRVTFQLKAERSYHIFYQITSNKKPDLIEMLLITTNPYDYAFVSQGEITVPSIDDQEELMATDSAIDILGFTPEEKVSIYKLTGAVMHYGNMKFKQKQREEQAEPDGTEVADKAAYLQNLNSADLLKALCYPRVKVGNEYVTKGQTVQQVYNAVGALAKAVYEKMFLWMVTRINQQLDTKQPRQYFIGVLDIAGFEIFDFNSLEQLCINFTNEKLQQFFNHHMFVLEQEEYKKEGIEWTFIDFGMDLAACIELIEKPLGIFSILEEECMFPKATDTSFKNKLYDQHLGKSANFQKPKVVKGKAEAHFSLIHYAGTVDYNIGGWLDKNKDPLNDTVVGLYQKSAMKTLASLFSTYASAEADSGAKKGAKKKGSSFQTVSALFRENLNKLMTNLRSTHPHFVRCIIPNETKTPGAMEHELVLHQLRCNGVLEGIRICRKGFPSRILYGDFKQRYKVLNASAIPEGQFIDSKKASEKLLASIDIDHTQYKFGHTKVFFKAGLLGLLEEMRDEKLSQIITRTQAVCRGFLMRVEYQKMLQRREALFCIQYNIRAFMNVKHWPWMRLFFKIKPLLKSAETEKEMATMKEEFQKTKDELAKSEAKRKELEEKMVTLLKEKNDLQLQVQSEADALADAEERCEQLIKNKIQLEAKIKEVTERAEDEEEINAELTAKKRKLEDECSELKKDIDDLELTLAKVEKEKHATENKVKNLTEEMAGLDETIAKLTKEKKALQEAHQQTLDDLQAEEDKVNTLTKAKTKLEQQVDDLEGSLEQERKLRMDLERAKRKLEGDLKLAQESTMDAENDKQQLDEKLKKKEFEISNLLSKIEDEQAIEIQLQKKIKELQARIEELEEEIEAERASRAKAEKQRSDLSRELEEISERLEEAGGATSAQIEMNKKREAEFQKMRRDLEEATLQHEATAATLRKKHADSVAELGEQIDNLQRVKQKLEKEKSEMKMEIDDLASNAETISKAKGNLEKMCRTLEDQVSELKTKEEEQQRLINDLTAQRARLQTEAGEYSRQLDEKDALVSQLSRSKQASTQQIEELKRQLEEETKAKNALAHALQSSRHDCDLLREQYEEEQEGKAELQRALSKANSEVAQWRTKYETDAIQRTEELEEAKKKLAQRLQEAEEHVEAVNAKCASLEKTKQRLQNEVEDLMLDVERSNAACAALDKKQRNFDKVLAEWKQKYEETQAELEASQKEARTLSTELFKVKNAYEESLDQVETLKRENKNLQQEISDLTEQIAEGGKQIHELEKIKKQVEQEKCDIQAALEEAEASLEHEEGKILRIQLELNQVKSEVDRKIAEKDEEIDQLKRNHIRVMESMQSTLDAEIRSRNDALRVKKKMEGDLNEMEIQLNHANRLAAESLRNYRNTQGILKDTQLHLDDALRGQEDLKEQLAMVERRANLLQAEIEELRATLEQTERSRKTAEQELLDASERVQLLHTQNTSLINTKKKLENDVSQLQSEVEEVIQESRNAEEKAKKAITDAAMMAEELKKEQDTSAHLERMKKNMEQTVKDLQHRLDEAEQLALKGGKKQIQKLEARVHELEGEVESEQKRNAEAVKGLRKHERRVKELTYQTEEDRKNVLRLQDLVDKLQAKVKSYKRQAEEAEEQSNTNLAKFRKLQHELEEAEERADIAESQVNKLRVKSREVHTKISAE.

A Myosin N-terminal SH3-like domain is found at 35–84; it reads DAKTSVFVAEPKASYVKSTIQSKEGGKVTVKTEGGATLTVREDQVFPMNP. T66 and T71 each carry phosphothreonine. Residues 88-783 form the Myosin motor domain; that stretch reads DKIEDMAMMT…LLGLLEEMRD (696 aa). K132 carries the N6,N6,N6-trimethyllysine modification. 181-188 serves as a coordination point for ATP; the sequence is GESGAGKT. Y391 carries the post-translational modification Phosphotyrosine. A Phosphothreonine modification is found at T421. Residue Y426 is modified to Phosphotyrosine. Phosphoserine is present on S627. The tract at residues 660–682 is actin-binding; it reads LNKLMTNLRSTHPHFVRCIIPNE. H758 bears the Pros-methylhistidine mark. The interval 762 to 776 is actin-binding; the sequence is KFGHTKVFFKAGLLG. The IQ domain occupies 783–815; the sequence is DEKLSQIITRTQAVCRGFLMRVEYQKMLQRREA. A coiled-coil region spans residues 844–1939; that stretch reads LLKSAETEKE…REVHTKISAE (1096 aa). 4 positions are modified to phosphoserine: S1093, S1097, S1163, and S1238. Phosphothreonine is present on T1242. Phosphoserine is present on S1244. Position 1256 is a phosphothreonine (T1256). S1262 carries the phosphoserine modification. Residues T1266 and T1287 each carry the phosphothreonine modification. S1293, S1304, and S1307 each carry phosphoserine. Y1465 is modified (phosphotyrosine). At T1468 the chain carries Phosphothreonine. S1475 is subject to Phosphoserine. A Phosphotyrosine modification is found at Y1493. S1496 bears the Phosphoserine mark. Phosphothreonine is present on T1502. The residue at position 1515 (S1515) is a Phosphoserine. Position 1518 is a phosphothreonine (T1518). 6 positions are modified to phosphoserine: S1555, S1575, S1601, S1604, S1715, and S1727. At T1731 the chain carries Phosphothreonine. S1740 carries the post-translational modification Phosphoserine.

It belongs to the TRAFAC class myosin-kinesin ATPase superfamily. Myosin family. Muscle myosin is a hexameric protein that consists of 2 heavy chain subunits (MHC), 2 alkali light chain subunits (MLC) and 2 regulatory light chain subunits (MLC-2).

The protein resides in the cytoplasm. It localises to the myofibril. Muscle contraction. In Canis lupus familiaris (Dog), this protein is Myosin-8 (MYH8).